A 424-amino-acid polypeptide reads, in one-letter code: 3-isopropylmalate dehydratase large subunit 1 (424 aa).

3 residues coordinate [4Fe-4S] cluster: Cys-303, Cys-363, and Cys-366.

The protein belongs to the aconitase/IPM isomerase family. LeuC type 2 subfamily. Heterodimer of LeuC and LeuD. [4Fe-4S] cluster is required as a cofactor.

It carries out the reaction (2R,3S)-3-isopropylmalate = (2S)-2-isopropylmalate. It participates in amino-acid biosynthesis; L-leucine biosynthesis; L-leucine from 3-methyl-2-oxobutanoate: step 2/4. In terms of biological role, catalyzes the isomerization between 2-isopropylmalate and 3-isopropylmalate, via the formation of 2-isopropylmaleate. This is 3-isopropylmalate dehydratase large subunit 1 from Pyrococcus furiosus (strain ATCC 43587 / DSM 3638 / JCM 8422 / Vc1).